Consider the following 393-residue polypeptide: S-adenosylmethionine synthase 1 (393 aa).

E9 is a binding site for Mg(2+). H15 lines the ATP pocket. E43 lines the K(+) pocket. L-methionine-binding residues include E56 and Q99. Residues 167–169 (DGK), 235–238 (SGRF), D246, 252–253 (RK), A269, K273, and K277 contribute to the ATP site. L-methionine is bound at residue D246. K277 serves as a coordination point for L-methionine.

Belongs to the AdoMet synthase family. Homotetramer. Requires Mn(2+) as cofactor. It depends on Mg(2+) as a cofactor. Co(2+) serves as cofactor. K(+) is required as a cofactor.

Its subcellular location is the cytoplasm. The catalysed reaction is L-methionine + ATP + H2O = S-adenosyl-L-methionine + phosphate + diphosphate. The protein operates within amino-acid biosynthesis; S-adenosyl-L-methionine biosynthesis; S-adenosyl-L-methionine from L-methionine: step 1/1. Catalyzes the formation of S-adenosylmethionine from methionine and ATP. The reaction comprises two steps that are both catalyzed by the same enzyme: formation of S-adenosylmethionine (AdoMet) and triphosphate, and subsequent hydrolysis of the triphosphate. In Brassica juncea (Indian mustard), this protein is S-adenosylmethionine synthase 1 (SAMS1).